A 594-amino-acid chain; its full sequence is Choline dehydrogenase, mitochondrial (594 aa).

Residues 1–29 (MWCLLRGLGRPGALARGALGQQQSLGARA) constitute a mitochondrion transit peptide. 42–71 (SYVVVGAGSAGCVLAGRLTEDPAERVLLLE) contacts FAD. At lysine 436 the chain carries N6-succinyllysine. N6-acetyllysine; alternate occurs at positions 484 and 496. 2 positions are modified to N6-succinyllysine; alternate: lysine 484 and lysine 496. The active-site Proton acceptor is the histidine 511. Lysine 580 is modified (N6-acetyllysine).

Belongs to the GMC oxidoreductase family. FAD is required as a cofactor.

The protein resides in the mitochondrion inner membrane. It carries out the reaction choline + A = betaine aldehyde + AH2. It participates in amine and polyamine biosynthesis; betaine biosynthesis via choline pathway; betaine aldehyde from choline (cytochrome c reductase route): step 1/1. This Homo sapiens (Human) protein is Choline dehydrogenase, mitochondrial (CHDH).